A 192-amino-acid chain; its full sequence is RNA-free ribonuclease P (192 aa).

This sequence belongs to the HARP family.

The catalysed reaction is Endonucleolytic cleavage of RNA, removing 5'-extranucleotides from tRNA precursor.. RNA-free RNase P that catalyzes the removal of the 5'-leader sequence from pre-tRNA to produce the mature 5'-terminus. This Alkalilimnicola ehrlichii (strain ATCC BAA-1101 / DSM 17681 / MLHE-1) protein is RNA-free ribonuclease P.